Consider the following 920-residue polypeptide: Plasma membrane ATPase (920 aa).

The segment at 1–77 is disordered; sequence MADHSASGAP…TPGGGRVVPE (77 aa). Residues 1–115 are Cytoplasmic-facing; that stretch reads MADHSASGAP…KEEKENHFLK (115 aa). Over residues 38-51 the composition is skewed to acidic residues; it reads EDDEDEDIDALIED. The helical transmembrane segment at 116 to 138 threads the bilayer; the sequence is FLGFFVGPIQFVMEGAAVLAAGL. The Extracellular segment spans residues 139–140; sequence ED. A helical transmembrane segment spans residues 141–160; sequence WVDFGVICGLLLLNAVVGFV. Over 161-291 the chain is Cytoplasmic; it reads QEFQAGSIVD…GSGHFTEVLN (131 aa). Residues 292–314 form a helical membrane-spanning segment; it reads GIGTILLILVIFTLLIVWVSSFY. The Extracellular segment spans residues 315-321; sequence RSNPIVQ. Residues 322-354 form a helical membrane-spanning segment; that stretch reads ILEFTLAITIIGVPVGLPAVVTTTMAVGAAYLA. Topologically, residues 355-687 are cytoplasmic; that stretch reads KKKAIVQKLS…LKTSRQIFHR (333 aa). Catalysis depends on aspartate 378, which acts as the 4-aspartylphosphate intermediate. The Mg(2+) site is built by aspartate 634 and aspartate 638. Residues 688–713 traverse the membrane as a helical segment; that stretch reads MYAYVVYRIALSIHLEIFLGLWIAIL. Residues 714–720 are Extracellular-facing; the sequence is NRSLNIE. The chain crosses the membrane as a helical span at residues 721-738; the sequence is LVVFIAIFADVATLAIAY. Residues 739–754 are Cytoplasmic-facing; that stretch reads DNAPYSQTPVKWNLPK. A helical transmembrane segment spans residues 755-779; sequence LWGMSVLLGVVLAVGTWITVTTMYA. The Extracellular portion of the chain corresponds to 780–806; sequence QGENGGIVQNFGNMDEVLFLQISLTEN. The next 2 membrane-spanning stretches (helical) occupy residues 807–826 and 827–847; these read WLIF…PSWQ and LSGA…WGWF. Residues 848 to 853 lie on the Extracellular side of the membrane; it reads EHSDTS. A helical membrane pass occupies residues 854 to 878; sequence IVAVVRIWIFSFGIFCIMGGVYYIL. Residues 879-920 lie on the Cytoplasmic side of the membrane; that stretch reads QDSVGFDNLMHGKSPKGNQKQRSLEDFVVSLQRVSTQHEKSQ.

Belongs to the cation transport ATPase (P-type) (TC 3.A.3) family. Type IIIA subfamily.

The protein localises to the cell membrane. It carries out the reaction ATP + H2O + H(+)(in) = ADP + phosphate + 2 H(+)(out). Its function is as follows. The plasma membrane ATPase of plants and fungi is a hydrogen ion pump. The proton gradient it generates drives the active transport of nutrients by H(+)-symport. The resulting external acidification and/or internal alkinization may mediate growth responses. The chain is Plasma membrane ATPase (pma-1) from Neurospora crassa (strain ATCC 24698 / 74-OR23-1A / CBS 708.71 / DSM 1257 / FGSC 987).